Here is a 47-residue protein sequence, read N- to C-terminus: MFDAVSDLVNAFTSINWEVIFQLLSVALIVIAGPVVIFLLAFRNGNL.

The helical transmembrane segment at Val-19–Leu-39 threads the bilayer.

This sequence belongs to the Psb30/Ycf12 family. In terms of assembly, PSII is composed of 1 copy each of membrane proteins PsbA, PsbB, PsbC, PsbD, PsbE, PsbF, PsbH, PsbI, PsbJ, PsbK, PsbL, PsbM, PsbT, PsbX, PsbY, PsbZ, Psb30/Ycf12, peripheral proteins PsbO, CyanoQ (PsbQ), PsbU, PsbV and a large number of cofactors. It forms dimeric complexes.

It is found in the cellular thylakoid membrane. A core subunit of photosystem II (PSII), probably helps stabilize the reaction center. This Nostoc punctiforme (strain ATCC 29133 / PCC 73102) protein is Photosystem II reaction center protein Psb30.